Reading from the N-terminus, the 147-residue chain is Leghemoglobin 8 (147 aa).

The Globin domain maps to 2-147 (GFTEKQESLV…LAASIKKSMS (146 aa)). Tyr25 and Tyr30 each carry nitrated tyrosine. Ser45 lines the heme b pocket. Ser45 bears the Phosphoserine mark. An O2-binding site is contributed by His62. Lys65, His94, and Lys97 together coordinate heme b. The residue at position 135 (Tyr135) is a Nitrated tyrosine.

The protein belongs to the plant globin family. In terms of assembly, monomer. Interacts with CAS31 in the cytoplasm; this interaction leads to its protection from denaturation under thermal and drought stresses. Nitrated in effective nodules and particularly in hypoxic conditions; this mechanism may play a protective role in the symbiosis by buffering toxic peroxynitrite NO(2)(-). Nitration level decrease during nodule senescence. In terms of processing, phosphorylation at Ser-45 disrupts the molecular environment of its porphyrin ring oxygen binding pocket, thus leading to a reduced oxygen consumption and to the delivery of oxygen O(2) to symbiosomes. As to expression, root nodules.

The protein localises to the cytoplasm. It localises to the nucleus. In terms of biological role, leghemoglobin that reversibly binds oxygen O(2) through a pentacoordinated heme iron. In root nodules, facilitates the diffusion of oxygen to the bacteroids while preventing the bacterial nitrogenase from being inactivated by buffering dioxygen, nitric oxide and carbon monoxide, and promoting the formation of reactive oxygen species (ROS, e.g. H(2)O(2)). This role is essential for symbiotic nitrogen fixation (SNF). The polypeptide is Leghemoglobin 8 (Medicago truncatula (Barrel medic)).